The sequence spans 100 residues: Large ribosomal subunit protein bL28 (100 aa).

Belongs to the bacterial ribosomal protein bL28 family.

The polypeptide is Large ribosomal subunit protein bL28 (Ehrlichia chaffeensis (strain ATCC CRL-10679 / Arkansas)).